Consider the following 216-residue polypeptide: Adenylate kinase (216 aa).

Position 10 to 15 (10 to 15 (GAGKGT)) interacts with ATP. An NMP region spans residues 30-59 (STGDIFRKNISNKTPLGMEAKSYMDKGQLV). Residues threonine 31, arginine 36, 57–59 (QLV), 85–88 (GFPR), and glutamine 92 each bind AMP. The segment at 126 to 163 (GRRVCGECGASYHIKFITPKTEGVCDLCGGKLVQRKDD) is LID. Arginine 127 contributes to the ATP binding site. Residues cysteine 130 and cysteine 133 each contribute to the Zn(2+) site. 136 to 137 (SY) provides a ligand contact to ATP. Zn(2+) is bound by residues cysteine 150 and cysteine 153. The AMP site is built by arginine 160 and arginine 171. Lysine 199 provides a ligand contact to ATP.

The protein belongs to the adenylate kinase family. As to quaternary structure, monomer.

Its subcellular location is the cytoplasm. It catalyses the reaction AMP + ATP = 2 ADP. It functions in the pathway purine metabolism; AMP biosynthesis via salvage pathway; AMP from ADP: step 1/1. Functionally, catalyzes the reversible transfer of the terminal phosphate group between ATP and AMP. Plays an important role in cellular energy homeostasis and in adenine nucleotide metabolism. The chain is Adenylate kinase from Clostridium tetani (strain Massachusetts / E88).